The primary structure comprises 473 residues: Ornithine decarboxylase (473 aa).

Lys-106 is subject to N6-(pyridoxal phosphate)lysine. Pyridoxal 5'-phosphate is bound by residues Ser-240, Gly-277, and 313-316 (EPGR). Position 367-368 (367-368 (FD)) interacts with substrate. The Proton donor; shared with dimeric partner role is filled by Cys-417. Substrate is bound at residue Asp-418. Tyr-447 provides a ligand contact to pyridoxal 5'-phosphate.

It belongs to the Orn/Lys/Arg decarboxylase class-II family. Homodimer. Only the dimer is catalytically active, as the active sites are constructed of residues from both monomers. Pyridoxal 5'-phosphate is required as a cofactor.

It is found in the cytoplasm. The enzyme catalyses L-ornithine + H(+) = putrescine + CO2. Its pathway is amine and polyamine biosynthesis; putrescine biosynthesis via L-ornithine pathway; putrescine from L-ornithine: step 1/1. Its activity is regulated as follows. Inhibited by antizyme (AZ) OAZ1 in response to polyamine levels. AZ inhibits the assembly of the functional homodimer by binding to ODC monomers and targeting them for ubiquitin-independent proteolytic destruction by the 26S proteasome. Its function is as follows. Catalyzes the first and rate-limiting step of polyamine biosynthesis that converts ornithine into putrescine, which is the precursor for the polyamines, spermidine and spermine. Polyamines are essential for cell proliferation and are implicated in cellular processes, ranging from DNA replication to apoptosis. The protein is Ornithine decarboxylase (SPE1) of Candida albicans (strain SC5314 / ATCC MYA-2876) (Yeast).